We begin with the raw amino-acid sequence, 445 residues long: Probable phosphoglucosamine mutase (445 aa).

Catalysis depends on Ser99, which acts as the Phosphoserine intermediate. Residues Ser99, Asp238, Asp240, and Asp242 each contribute to the Mg(2+) site. At Ser99 the chain carries Phosphoserine.

This sequence belongs to the phosphohexose mutase family. It depends on Mg(2+) as a cofactor. Activated by phosphorylation.

The enzyme catalyses alpha-D-glucosamine 1-phosphate = D-glucosamine 6-phosphate. Catalyzes the conversion of glucosamine-6-phosphate to glucosamine-1-phosphate. The polypeptide is Probable phosphoglucosamine mutase (Methanobrevibacter smithii (strain ATCC 35061 / DSM 861 / OCM 144 / PS)).